Consider the following 464-residue polypeptide: MSDKKELLWQSRFSEPFDRDALRFSSSVHIDKALFREDIEGSIAHVTMLAEQDIISDAECADLVQGLREIEEELASGTLVPHWEDEDIHTVIENRLKEKIGQTAGKIHSGRSRNDQVATDTRLYLRKKIAELQDAVQAMQQMLIGKAETYKETIIFGYTHLQRAQPISAGHYYLAWFSMFRRDRERLRDLLRRVNISPLGAAAFAGSTLPLNPARTAELLAFDDIFSNSIDAVSDRDILIEFISACSIMMMHLSRFAEDLILWSSYEFGYLEISDAFATGSSLMPQKKNADIAELVRGKTGRVYGNLVSMLTIMKGLPLSYNRDMQEDKQPLFDTAETTISSMRIFTKLIGHTTLKVERLRSLTSEDLSLATEIAEYLVSRNLPFREAHRITGKIVTFSIGEGITLPRITLEQFRTFSPLFDSAIYDSLKPEASVNSKKSHGSCSFRSVEAQLAEARAQMQENR.

It belongs to the lyase 1 family. Argininosuccinate lyase subfamily.

It localises to the cytoplasm. The catalysed reaction is 2-(N(omega)-L-arginino)succinate = fumarate + L-arginine. Its pathway is amino-acid biosynthesis; L-arginine biosynthesis; L-arginine from L-ornithine and carbamoyl phosphate: step 3/3. This Chlorobium phaeobacteroides (strain DSM 266 / SMG 266 / 2430) protein is Argininosuccinate lyase.